We begin with the raw amino-acid sequence, 66 residues long: DNA gyrase inhibitor YacG (66 aa).

Zn(2+)-binding residues include Cys9, Cys12, Cys28, and Cys32. The segment at 45–66 (HKIAGSEGSEDELYSGDLEPRH) is disordered.

Belongs to the DNA gyrase inhibitor YacG family. In terms of assembly, interacts with GyrB. It depends on Zn(2+) as a cofactor.

In terms of biological role, inhibits all the catalytic activities of DNA gyrase by preventing its interaction with DNA. Acts by binding directly to the C-terminal domain of GyrB, which probably disrupts DNA binding by the gyrase. The chain is DNA gyrase inhibitor YacG from Pseudomonas putida (strain ATCC 700007 / DSM 6899 / JCM 31910 / BCRC 17059 / LMG 24140 / F1).